The primary structure comprises 228 residues: 2-C-methyl-D-erythritol 4-phosphate cytidylyltransferase (228 aa).

Belongs to the IspD/TarI cytidylyltransferase family. IspD subfamily.

The catalysed reaction is 2-C-methyl-D-erythritol 4-phosphate + CTP + H(+) = 4-CDP-2-C-methyl-D-erythritol + diphosphate. It functions in the pathway isoprenoid biosynthesis; isopentenyl diphosphate biosynthesis via DXP pathway; isopentenyl diphosphate from 1-deoxy-D-xylulose 5-phosphate: step 2/6. Catalyzes the formation of 4-diphosphocytidyl-2-C-methyl-D-erythritol from CTP and 2-C-methyl-D-erythritol 4-phosphate (MEP). In Nostoc sp. (strain PCC 7120 / SAG 25.82 / UTEX 2576), this protein is 2-C-methyl-D-erythritol 4-phosphate cytidylyltransferase.